The following is a 147-amino-acid chain: Orcokinin peptides (147 aa).

The N-terminal stretch at 1–27 (MPRHSVFALSILALSITATVWIPTVQA) is a signal peptide. 2 propeptides span residues 28-89 (ETNL…ERFG) and 146-147 (FG).

This sequence belongs to the orcokinin family.

It localises to the secreted. In terms of biological role, myotropic peptides. The chain is Orcokinin peptides from Apis mellifera (Honeybee).